The chain runs to 260 residues: Cell division protein DivIB (260 aa).

The Cytoplasmic portion of the chain corresponds to 1–25; sequence MGAQDQNGKNHGGLFRDFQNRNVKK. A helical transmembrane segment spans residues 26–46; that stretch reads MWPLVMPITIILLVMIFMISS. The Extracellular portion of the chain corresponds to 47-260; that stretch reads YSRVKKVTVS…STKTTSVQGY (214 aa). Residues 48 to 119 form the POTRA domain; that stretch reads SRVKKVTVSG…NQVKIKVEEY (72 aa).

It belongs to the FtsQ/DivIB family. DivIB subfamily.

It localises to the cell membrane. Cell division protein that may be involved in stabilizing or promoting the assembly of the division complex. This is Cell division protein DivIB from Lentilactobacillus buchneri (strain NRRL B-30929) (Lactobacillus buchneri).